The sequence spans 407 residues: 12S rRNA N(4)-cytidine methyltransferase METTL15 (407 aa).

Residues 100-102 (GGH), Asp-119, Phe-146, Asp-169, and Gln-176 contribute to the S-adenosyl-L-methionine site. Ser-358 is subject to Phosphoserine.

This sequence belongs to the methyltransferase superfamily. RsmH family.

The protein resides in the mitochondrion matrix. It carries out the reaction cytidine(839) in 12S rRNA + S-adenosyl-L-methionine = N(4)-methylcytidine(839) in 12S rRNA + S-adenosyl-L-homocysteine + H(+). Functionally, N4-methylcytidine (m4C) methyltransferase responsible for the methylation of position C839 in mitochondrial 12S rRNA. Involved in the stabilization of 12S rRNA folding, therefore facilitating the assembly of the mitochondrial small ribosomal subunits. This is 12S rRNA N(4)-cytidine methyltransferase METTL15 from Homo sapiens (Human).